A 710-amino-acid polypeptide reads, in one-letter code: MEDDGKSPPDSAYGEPKKYDPNFKGPIQNRGCTDILCCILIVLGIIAYVAVGIVAWTYGDPRKVIYPTDSKGQFCGQVGTPNEKKPFLFYFNIMKCASPLVLLQFQCPTTQICVENCPDRFLTYLSVATTQQNFDYYKQFCRDGFNNFTKSPVEVLRDRDCPAMITPSKPFTRRCFPAINTQKGVVMVGNSTTFDDGRGDKQRNVTDLLEGAKKANVVLEARQVAMKIFEDYTVSWYWIIIGLIIAMVISLIFVVLLRFLAGIMVWVMIVLVIAVMGYGIFHCYMEYARLKGQSGSDVTLKDIGFQTDIRVYLHLRQTWLAFMIILCILEVIVILLLIFLRKRIMIAIALIKEASRAVGFVMSSLVFPLFTFLLVCLCIAYWAITAVFLSTSNEAVYKVFNETQCDFSGNTCNPETFNTTNVTRVCPDATCQFAFYGGETYYHKYLIVFQIYNAFMFLWLANFVIALGQVTLAGAFASYYWAFKKPDDMPAFPIFSSLGRALRYHTGSLAFGSLILAIVQMIRILLEYLDHKLKGADNKCARFLLCCLKCCFWCLEKFIKFLNRNAYIMIAIYGTNFCTSARNAFFLLMRNIIRVAVLDKVTDFLLFLGKLLVVGCVGILAFFFFSRRIQIVQDTAPTLNYYWVPILTVILGSYLIAHGFFSVYGMCVDTLFLCFLEDLERNDGSTERPYFMSGSLQKLLNKSNQTKPDK.

The Cytoplasmic portion of the chain corresponds to 1 to 34; that stretch reads MEDDGKSPPDSAYGEPKKYDPNFKGPIQNRGCTD. The helical transmembrane segment at 35–55 threads the bilayer; it reads ILCCILIVLGIIAYVAVGIVA. The Extracellular portion of the chain corresponds to 56–236; it reads WTYGDPRKVI…KIFEDYTVSW (181 aa). Residues Asn-147, Asn-190, and Asn-204 are each glycosylated (N-linked (GlcNAc...) asparagine). The helical transmembrane segment at 237 to 257 threads the bilayer; sequence YWIIIGLIIAMVISLIFVVLL. Topologically, residues 258-260 are cytoplasmic; that stretch reads RFL. Residues 261-281 form a helical membrane-spanning segment; sequence AGIMVWVMIVLVIAVMGYGIF. Residues 282–319 are Extracellular-facing; that stretch reads HCYMEYARLKGQSGSDVTLKDIGFQTDIRVYLHLRQTW. A helical transmembrane segment spans residues 320 to 340; that stretch reads LAFMIILCILEVIVILLLIFL. Topologically, residues 341-368 are cytoplasmic; sequence RKRIMIAIALIKEASRAVGFVMSSLVFP. A helical membrane pass occupies residues 369–389; that stretch reads LFTFLLVCLCIAYWAITAVFL. The Extracellular portion of the chain corresponds to 390 to 458; it reads STSNEAVYKV…FQIYNAFMFL (69 aa). N-linked (GlcNAc...) asparagine glycans are attached at residues Asn-401, Asn-418, and Asn-421. Residues 459–481 form a helical membrane-spanning segment; that stretch reads WLANFVIALGQVTLAGAFASYYW. The Cytoplasmic portion of the chain corresponds to 482–508; the sequence is AFKKPDDMPAFPIFSSLGRALRYHTGS. The helical transmembrane segment at 509–529 threads the bilayer; that stretch reads LAFGSLILAIVQMIRILLEYL. The Extracellular segment spans residues 530–567; the sequence is DHKLKGADNKCARFLLCCLKCCFWCLEKFIKFLNRNAY. Residues 568 to 588 traverse the membrane as a helical segment; the sequence is IMIAIYGTNFCTSARNAFFLL. Residues 589-603 lie on the Cytoplasmic side of the membrane; that stretch reads MRNIIRVAVLDKVTD. The chain crosses the membrane as a helical span at residues 604–624; it reads FLLFLGKLLVVGCVGILAFFF. The Extracellular segment spans residues 625–642; sequence FSRRIQIVQDTAPTLNYY. A helical transmembrane segment spans residues 643–663; sequence WVPILTVILGSYLIAHGFFSV. The Cytoplasmic portion of the chain corresponds to 664 to 710; it reads YGMCVDTLFLCFLEDLERNDGSTERPYFMSGSLQKLLNKSNQTKPDK.

Belongs to the CTL (choline transporter-like) family.

It localises to the cell membrane. Its subcellular location is the mitochondrion outer membrane. The enzyme catalyses choline(out) + n H(+)(in) = choline(in) + n H(+)(out). It catalyses the reaction ethanolamine(out) + n H(+)(in) = ethanolamine(in) + n H(+)(out). Choline/H+ antiporter, mainly in mitochodria. Also acts as a low-affinity ethanolamine/H+ antiporter, regulating the supply of extracellular ethanolamine (Etn) for the CDP-Etn pathway, redistribute intracellular Etn and balance the CDP-Cho and CDP-Etn arms of the Kennedy pathway. This is Choline transporter-like protein 2 (slc44a2) from Xenopus laevis (African clawed frog).